We begin with the raw amino-acid sequence, 411 residues long: Multifunctional CCA protein (411 aa).

2 residues coordinate ATP: Gly-8 and Arg-11. Residues Gly-8 and Arg-11 each contribute to the CTP site. Residues Asp-21 and Asp-23 each contribute to the Mg(2+) site. ATP contacts are provided by Arg-91, Arg-137, and Arg-140. Arg-91, Arg-137, and Arg-140 together coordinate CTP. The HD domain maps to 226 to 327 (TGVHVMLVID…LRFLQETDAL (102 aa)).

The protein belongs to the tRNA nucleotidyltransferase/poly(A) polymerase family. Bacterial CCA-adding enzyme type 1 subfamily. Monomer. Can also form homodimers and oligomers. Mg(2+) serves as cofactor. Requires Ni(2+) as cofactor.

It catalyses the reaction a tRNA precursor + 2 CTP + ATP = a tRNA with a 3' CCA end + 3 diphosphate. The catalysed reaction is a tRNA with a 3' CCA end + 2 CTP + ATP = a tRNA with a 3' CCACCA end + 3 diphosphate. In terms of biological role, catalyzes the addition and repair of the essential 3'-terminal CCA sequence in tRNAs without using a nucleic acid template. Adds these three nucleotides in the order of C, C, and A to the tRNA nucleotide-73, using CTP and ATP as substrates and producing inorganic pyrophosphate. tRNA 3'-terminal CCA addition is required both for tRNA processing and repair. Also involved in tRNA surveillance by mediating tandem CCA addition to generate a CCACCA at the 3' terminus of unstable tRNAs. While stable tRNAs receive only 3'-terminal CCA, unstable tRNAs are marked with CCACCA and rapidly degraded. The protein is Multifunctional CCA protein of Methylobacillus flagellatus (strain ATCC 51484 / DSM 6875 / VKM B-1610 / KT).